A 128-amino-acid chain; its full sequence is Large ribosomal subunit protein eL31 (128 aa).

The protein belongs to the eukaryotic ribosomal protein eL31 family.

The sequence is that of Large ribosomal subunit protein eL31 (RpL31) from Drosophila virilis (Fruit fly).